A 488-amino-acid polypeptide reads, in one-letter code: Cysteine desulfurase, mitochondrial (488 aa).

A disordered region spans residues 25 to 52; sequence LPKPLATSSSPATNAPNKTSNPKTGELH. Polar residues predominate over residues 30–47; it reads ATSSSPATNAPNKTSNPK. Pyridoxal 5'-phosphate is bound by residues 157-158, Asn-237, Gln-265, and 285-287; these read AT and SSH. Lys-288 carries the post-translational modification N6-(pyridoxal phosphate)lysine. Thr-325 provides a ligand contact to pyridoxal 5'-phosphate. The Cysteine persulfide intermediate role is filled by Cys-412. Residue Cys-412 coordinates [2Fe-2S] cluster.

The protein belongs to the class-V pyridoxal-phosphate-dependent aminotransferase family. NifS/IscS subfamily. The cofactor is pyridoxal 5'-phosphate.

The protein localises to the mitochondrion. It catalyses the reaction (sulfur carrier)-H + L-cysteine = (sulfur carrier)-SH + L-alanine. In terms of biological role, catalyzes the removal of elemental sulfur from cysteine to produce alanine. It supplies the inorganic sulfur for iron-sulfur (Fe-S) clusters. Plays a role in both tRNA-processing and mitochondrial metabolism. Involved in the 2-thio-modification of both 5-carboxymethylaminomethyl-2-thiouridine in mitochondrial tRNAs and 5-methoxycarbonylmethyl-2-thiouridine (mcm5s2U) in cytoplasmic tRNAs. The sequence is that of Cysteine desulfurase, mitochondrial (NFS1) from Candida albicans (strain SC5314 / ATCC MYA-2876) (Yeast).